The primary structure comprises 287 residues: 4-diphosphocytidyl-2-C-methyl-D-erythritol kinase (287 aa).

Residue K22 is part of the active site. Residue 102-112 participates in ATP binding; that stretch reads PAAAGIGGGSS. Residue D139 is part of the active site.

This sequence belongs to the GHMP kinase family. IspE subfamily.

It catalyses the reaction 4-CDP-2-C-methyl-D-erythritol + ATP = 4-CDP-2-C-methyl-D-erythritol 2-phosphate + ADP + H(+). Its pathway is isoprenoid biosynthesis; isopentenyl diphosphate biosynthesis via DXP pathway; isopentenyl diphosphate from 1-deoxy-D-xylulose 5-phosphate: step 3/6. Its function is as follows. Catalyzes the phosphorylation of the position 2 hydroxy group of 4-diphosphocytidyl-2C-methyl-D-erythritol. The polypeptide is 4-diphosphocytidyl-2-C-methyl-D-erythritol kinase (Dinoroseobacter shibae (strain DSM 16493 / NCIMB 14021 / DFL 12)).